We begin with the raw amino-acid sequence, 320 residues long: Cytochrome f (320 aa).

Residues 1-35 (MQNRNTFSWVKEQMTRFISVSIMIYVITRTSIANA) form the signal peptide. Heme-binding residues include Tyr-36, Cys-56, Cys-59, and His-60. Residues 286–306 (VQGLLFFLASVILAQIFLVLK) traverse the membrane as a helical segment.

It belongs to the cytochrome f family. The 4 large subunits of the cytochrome b6-f complex are cytochrome b6, subunit IV (17 kDa polypeptide, petD), cytochrome f and the Rieske protein, while the 4 small subunits are PetG, PetL, PetM and PetN. The complex functions as a dimer. The cofactor is heme.

The protein localises to the plastid. The protein resides in the chloroplast thylakoid membrane. Its function is as follows. Component of the cytochrome b6-f complex, which mediates electron transfer between photosystem II (PSII) and photosystem I (PSI), cyclic electron flow around PSI, and state transitions. This Acorus calamus (Sweet flag) protein is Cytochrome f.